Here is a 428-residue protein sequence, read N- to C-terminus: MGNNIKVTFDPNKLAAWWPTVGTYYTPTTTVTNPAIFKPGIYQTTSLKNPKNQQELDAILMTRYKEIDWDNWQGFPVNQRLPVSNNNPPSGQRAETFEIKSRPIIVPGIRDIPRGIVPPQTPSNRDQRRKPTPLTPPLRDTHPHLTMKNQTGHLQGFAEGLRALTTSDHHNSAYGDPFTTLSPVVPTVSTTLSPPLTIGDPVLSTEMSPSGLLGLLAGLQVVYFLWTKILTIAQSLDWWWTSLSFPGGIPECTGQNLQFQTCKHLPTSCPPTCNGFRWMYLRRFIIYLLVLLLFLTFLLVLLDWKGLLPVCPMMPATETTVNCRQCTISAQDTFTTPYCCCLKPTAGNCTCWPIPSSWALGSYLWEWALARFSWLSLLVPLLQWLGGISLTVWLLLIWMIWFWGPVLMSILPPFIPIFALFFLIWAYI.

A lipid anchor (N-myristoyl glycine; by host) is attached at glycine 2. The interval 2–145 (GNNIKVTFDP…PPLRDTHPHL (144 aa)) is pre-S1. The pre-S stretch occupies residues 2 to 204 (GNNIKVTFDP…PLTIGDPVLS (203 aa)). At 2 to 211 (GNNIKVTFDP…VLSTEMSPSG (210 aa)) the chain is on the virion surface; in external conformation side. Over 2-283 (GNNIKVTFDP…NGFRWMYLRR (282 aa)) the chain is Intravirion; in internal conformation. An N-linked (GlcNAc...) asparagine glycan is attached at asparagine 3. The segment at 110-144 (RDIPRGIVPPQTPSNRDQRRKPTPLTPPLRDTHPH) is disordered. The segment at 146–204 (TMKNQTGHLQGFAEGLRALTTSDHHNSAYGDPFTTLSPVVPTVSTTLSPPLTIGDPVLS) is pre-S2. A helical transmembrane segment spans residues 212 to 232 (LLGLLAGLQVVYFLWTKILTI). Over 233-283 (AQSLDWWWTSLSFPGGIPECTGQNLQFQTCKHLPTSCPPTCNGFRWMYLRR) the chain is Intravirion; in external conformation. A helical membrane pass occupies residues 284–304 (FIIYLLVLLLFLTFLLVLLDW). Residues 305–376 (KGLLPVCPMM…WALARFSWLS (72 aa)) lie on the Virion surface side of the membrane. An N-linked (GlcNAc...) asparagine; by host glycan is attached at asparagine 348. Residues 377-397 (LLVPLLQWLGGISLTVWLLLI) traverse the membrane as a helical segment. Over 398–403 (WMIWFW) the chain is Intravirion. The helical transmembrane segment at 404 to 426 (GPVLMSILPPFIPIFALFFLIWA) threads the bilayer. Residues 427–428 (YI) are Virion surface-facing.

This sequence belongs to the orthohepadnavirus major surface antigen family. In its internal form (Li-HBsAg), interacts with the capsid protein and with the isoform S. Interacts with host chaperone CANX. In terms of assembly, associates with host chaperone CANX through its pre-S2 N glycan; this association may be essential for isoform M proper secretion. As to quaternary structure, interacts with isoform L. Interacts with the antigens of satellite virus HDV (HDVAgs); this interaction is required for encapsidation of HDV genomic RNA. Isoform M is N-terminally acetylated by host at a ratio of 90%, and N-glycosylated by host at the pre-S2 region. In terms of processing, myristoylated.

The protein resides in the virion membrane. In terms of biological role, the large envelope protein exists in two topological conformations, one which is termed 'external' or Le-HBsAg and the other 'internal' or Li-HBsAg. In its external conformation the protein attaches the virus to cell receptors and thereby initiating infection. This interaction determines the species specificity and liver tropism. This attachment induces virion internalization predominantly through caveolin-mediated endocytosis. The large envelope protein also assures fusion between virion membrane and endosomal membrane. In its internal conformation the protein plays a role in virion morphogenesis and mediates the contact with the nucleocapsid like a matrix protein. Its function is as follows. The middle envelope protein plays an important role in the budding of the virion. It is involved in the induction of budding in a nucleocapsid independent way. In this process the majority of envelope proteins bud to form subviral lipoprotein particles of 22 nm of diameter that do not contain a nucleocapsid. This is Large envelope protein from Ground squirrel hepatitis virus (strain 27) (GSHV).